Here is a 120-residue protein sequence, read N- to C-terminus: DNA-binding protein HQ_1105A (120 aa).

The interval 1–55 (MSETPDDLDELRQQRMEELRDQADGQQSQTSDNTAAAQEAAREKAEAQQEALLKQ) is disordered. The segment covering 10 to 23 (ELRQQRMEELRDQA) has biased composition (basic and acidic residues). Residues 24–34 (DGQQSQTSDNT) are compositionally biased toward polar residues.

Belongs to the PDCD5 family.

The protein is DNA-binding protein HQ_1105A of Haloquadratum walsbyi (strain DSM 16790 / HBSQ001).